Here is a 442-residue protein sequence, read N- to C-terminus: Ribosomal protein uS12 methylthiotransferase RimO (442 aa).

The region spanning 8-118 (PKVGFVSLGC…VLGHVHKYVA (111 aa)) is the MTTase N-terminal domain. 6 residues coordinate [4Fe-4S] cluster: Cys17, Cys53, Cys82, Cys150, Cys154, and Cys157. The Radical SAM core domain occupies 136–373 (LTPRHYAYLK…MELQQQVSIR (238 aa)). Residues 376-442 (ARKVGKEMTV…EYDLWASLIG (67 aa)) form the TRAM domain.

This sequence belongs to the methylthiotransferase family. RimO subfamily. Requires [4Fe-4S] cluster as cofactor.

The protein resides in the cytoplasm. It carries out the reaction L-aspartate(89)-[ribosomal protein uS12]-hydrogen + (sulfur carrier)-SH + AH2 + 2 S-adenosyl-L-methionine = 3-methylsulfanyl-L-aspartate(89)-[ribosomal protein uS12]-hydrogen + (sulfur carrier)-H + 5'-deoxyadenosine + L-methionine + A + S-adenosyl-L-homocysteine + 2 H(+). Catalyzes the methylthiolation of an aspartic acid residue of ribosomal protein uS12. The chain is Ribosomal protein uS12 methylthiotransferase RimO from Aeromonas salmonicida (strain A449).